Here is a 132-residue protein sequence, read N- to C-terminus: Ribonuclease VapC (132 aa).

The region spanning 4–123 (YMLDTNIVIY…SNNLREFERV (120 aa)) is the PINc domain. Residues Asp-7 and Asp-98 each coordinate Mg(2+).

The protein belongs to the PINc/VapC protein family. As to quaternary structure, probably forms a complex with cognate antitoxin VapB2. Mg(2+) serves as cofactor.

In terms of biological role, toxic component of a type II toxin-antitoxin (TA) system. Acts as an RNase. Its toxic effect is neutralized by cognate antitoxin VapB2 but not by non-cognate antitoxin VapB1. This is Ribonuclease VapC from Haemophilus influenzae (strain 86-028NP).